A 327-amino-acid chain; its full sequence is Urease accessory protein 4 (327 aa).

N120 is a glycosylation site (N-linked (GlcNAc...) asparagine). A helical transmembrane segment spans residues 239–259; the sequence is VYATVLIIGPHLTTLFSYLAY.

It belongs to the UreD family. URE4, URE6 and URE7 may form a complex that acts as a GTP-hydrolysis-dependent molecular chaperone, activating the urease apoprotein URE1.

It localises to the membrane. In terms of biological role, urease accessory protein required for the maturation and activation of urease via the functional incorporation of the urease nickel metallocenter. Plays a role in host brain invasion. The sequence is that of Urease accessory protein 4 from Cryptococcus neoformans var. grubii serotype A (strain H99 / ATCC 208821 / CBS 10515 / FGSC 9487) (Filobasidiella neoformans var. grubii).